Reading from the N-terminus, the 349-residue chain is MSLIEDLKALKATAVARINATEADVEALRVSLLGKKGELTALLKGMKDVAPEERKTVGEIGNDVRQTITTLLAQKKAAEETARLNEQLAAETIDVTLPGSAHQVGQPHVLQQIIDEIEQHFLGLGFEIIDDIVDSPEVETDEYNFERENLPKDHPARDMQDTFYITPEILLRTQTSPVQSRSLEKHDFSKGPLKMIAPGKVYRRDTDDATHSHQFHQVEGMVVGENITMADLKGTLLSIMQKLFGEKHQIRMRPSYFPFTEPSVEVDVSWNEVTPDMKPEDIEWIEVLGAGMTHPNVLRMDGIDPEKYSAFAFGLGPDRFAMLKYGVDDIRQFYLNDVRFLSQFNRKGN.

Glu-261 is a Mg(2+) binding site.

Belongs to the class-II aminoacyl-tRNA synthetase family. Phe-tRNA synthetase alpha subunit type 1 subfamily. As to quaternary structure, tetramer of two alpha and two beta subunits. Mg(2+) is required as a cofactor.

It localises to the cytoplasm. It catalyses the reaction tRNA(Phe) + L-phenylalanine + ATP = L-phenylalanyl-tRNA(Phe) + AMP + diphosphate + H(+). This is Phenylalanine--tRNA ligase alpha subunit from Leuconostoc citreum (strain KM20).